The primary structure comprises 183 residues: Acireductone dioxygenase (183 aa).

Fe(2+)-binding residues include His-95, His-97, Glu-101, and His-139. Ni(2+)-binding residues include His-95, His-97, Glu-101, and His-139.

It belongs to the acireductone dioxygenase (ARD) family. In terms of assembly, monomer. Fe(2+) serves as cofactor. Requires Ni(2+) as cofactor.

It catalyses the reaction 1,2-dihydroxy-5-(methylsulfanyl)pent-1-en-3-one + O2 = 3-(methylsulfanyl)propanoate + CO + formate + 2 H(+). It carries out the reaction 1,2-dihydroxy-5-(methylsulfanyl)pent-1-en-3-one + O2 = 4-methylsulfanyl-2-oxobutanoate + formate + 2 H(+). The protein operates within amino-acid biosynthesis; L-methionine biosynthesis via salvage pathway; L-methionine from S-methyl-5-thio-alpha-D-ribose 1-phosphate: step 5/6. Its function is as follows. Catalyzes 2 different reactions between oxygen and the acireductone 1,2-dihydroxy-3-keto-5-methylthiopentene (DHK-MTPene) depending upon the metal bound in the active site. Fe-containing acireductone dioxygenase (Fe-ARD) produces formate and 2-keto-4-methylthiobutyrate (KMTB), the alpha-ketoacid precursor of methionine in the methionine recycle pathway. Ni-containing acireductone dioxygenase (Ni-ARD) produces methylthiopropionate, carbon monoxide and formate, and does not lie on the methionine recycle pathway. This chain is Acireductone dioxygenase, found in Aquifex aeolicus (strain VF5).